The sequence spans 870 residues: MHEQYSPREIEAAAQSHWDAQKSFVVSEQPGKDTFYCLSMFPYPSGKLHMGHVRNYTIGDVIARYQRMQGKNVLQPMGWDAFGMPAENAAMKNQVAPAKWTYENIAYMKSQLKSLGLAIDWTREVTTCKPDYYRWEQWLFTRLFEKGVIYRKNGTVNWDPVDQTVLANEQVIDGRGWRSGALIEKREIPMYYFKITAYADELLSSLDELDGWPEQVKTMQRNWIGKSFGADIVFDYDVASIGIDGQLKVYSTRPDTLMGATYVAVAAEHPLAQRAAESNPAIAAFIAECKAGSVAEADMATMEKKGLATGQFVIHPLTGDKLPVFVANYVLWGYGEGAVMAVPAHDERDFEFANKYDLPIKQVYTGEGKDYDASTWQDWYGDKAGLTTINSGKYDGLDFSAAFDAIVGDLEASAHGARKTQFRLRDWGISRQRYWGCPIPIIHCDSCGDVPVPEDQLPVVLPEDVVPDGAGSPLAKMPEFYECTCPKCGAPAKRETDTMDTFVESSWYFARYASPNYEGGMVDPQAANHWLPVDQYIGGIEHAILHLLYARFFHKLMRDEGLVSSNEPFKNLLTQGMVVAETYYRTLENGGKDWFNPADVEVERDAKAKVIGAKLKSDGLPVEIGGTEKMSKSKNNGVDPQDMIDAYGADTCRLFMMFASPPDMSCEWSDAGVEGANRFLRRVWRLAHGHVSAGLPGKLDVASLSDEQKAVRRAIHLAIKQASNDIGQHHKFNTAIAQVMTLMNVLEKAATATEQDRALVQEGLEIVTLLLAPITPHISHELWQRLGHADAVIDAQWPQVDESALVQDSLTLVVQVNGKLRGQIEVPASASREDVEAAARANENVLRFTEGLSIRKVIVVPGKLVNIVAN.

Residues 42–52 (PYPSGKLHMGH) carry the 'HIGH' region motif. A 'KMSKS' region motif is present at residues 629 to 633 (KMSKS). Lys-632 serves as a coordination point for ATP.

This sequence belongs to the class-I aminoacyl-tRNA synthetase family.

The protein localises to the cytoplasm. The catalysed reaction is tRNA(Leu) + L-leucine + ATP = L-leucyl-tRNA(Leu) + AMP + diphosphate. The chain is Leucine--tRNA ligase from Ectopseudomonas mendocina (strain ymp) (Pseudomonas mendocina).